The chain runs to 561 residues: Putative transport protein AHA_2450 (561 aa).

The next 5 helical transmembrane spans lie at 8–28 (LLHQ…LLLG), 37–57 (IGNT…GFEF), 66–86 (FMLF…SVFL), 90–110 (IHYI…TVGL), and 161–181 (NMGI…MLVV). 2 RCK C-terminal domains span residues 206 to 291 (SDNE…NYRN) and 293 to 376 (KEVF…KIGF). The next 5 helical transmembrane spans lie at 386 to 406 (LVAF…SLVF), 409 to 429 (LEFG…MGYL), 450 to 470 (LGLA…ILDH), 476 to 496 (AVVL…GYLF), and 541 to 561 (TYAV…GFWF).

This sequence belongs to the AAE transporter (TC 2.A.81) family. YbjL subfamily.

The protein localises to the cell membrane. This is Putative transport protein AHA_2450 from Aeromonas hydrophila subsp. hydrophila (strain ATCC 7966 / DSM 30187 / BCRC 13018 / CCUG 14551 / JCM 1027 / KCTC 2358 / NCIMB 9240 / NCTC 8049).